A 560-amino-acid chain; its full sequence is Putative transport protein VV1438 (560 aa).

5 helical membrane passes run 5–25 (VVLLLQQNPILLIFVVLAIGL), 37–57 (LGNSIGVLITSLIMGHLGFSF), 66–86 (FMLFIYCVGIEAGPNFFGIFF), 91–111 (HYFTLSMVVLVTAVSISYFAS), and 164–184 (VGYAMAYLVGLISMIMFAKLL). RCK C-terminal domains lie at 203 to 292 (RGLG…FRNG) and 293 to 376 (KEVF…RIGF). 6 helical membrane passes run 386–406 (LLAFCSFFILGIMFGLVTMTF), 409–429 (VSFSLGNAVGLLLSGITLGFL), 443–463 (ALNMVKDLGLMIFMVGIGLSA), 478–498 (IIGIAFLVSVVPVFFAYLVGA), 506–526 (ALLFGAIIGARTCAPAMDIVN), and 539–559 (AGTYAIANILMTLAGTILIIL).

Belongs to the AAE transporter (TC 2.A.81) family. YbjL subfamily.

It is found in the cell membrane. This Vibrio vulnificus (strain YJ016) protein is Putative transport protein VV1438.